A 210-amino-acid chain; its full sequence is MLGIIGKKLGMTTLYDEAGRSVPCTVITGGPCVVTQIKNIEKDGYTAVQLGYDDKKEKNTVKPLMGHFQKAQTTPKRKLVEFKEFGKELGKEIQLGQTIQLHDIFVEGEYVDAIGLSKGKGFQGVVKRHGFSGVGGKSHGQHNRERAPGAIGACSTPSRVFKGMRMAGRTGGQRVKITNLRIMKLVPEKNILVISGSVPGAKNGYIILEK.

Belongs to the universal ribosomal protein uL3 family. As to quaternary structure, part of the 50S ribosomal subunit. Forms a cluster with proteins L14 and L19.

Its function is as follows. One of the primary rRNA binding proteins, it binds directly near the 3'-end of the 23S rRNA, where it nucleates assembly of the 50S subunit. The polypeptide is Large ribosomal subunit protein uL3 (Amoebophilus asiaticus (strain 5a2)).